Reading from the N-terminus, the 49-residue chain is Large ribosomal subunit protein bL33B (49 aa).

This sequence belongs to the bacterial ribosomal protein bL33 family.

This chain is Large ribosomal subunit protein bL33B, found in Bacillus cytotoxicus (strain DSM 22905 / CIP 110041 / 391-98 / NVH 391-98).